We begin with the raw amino-acid sequence, 150 residues long: Cytosine deaminase (150 aa).

In terms of domain architecture, CMP/dCMP-type deaminase spans 3 to 121 (FDDKKGLQVA…KLLIENGVEV (119 aa)). Asparagine 44 serves as a coordination point for substrate. Histidine 55 contributes to the Zn(2+) binding site. Glutamate 57 (proton donor) is an active-site residue. Residues cysteine 84 and cysteine 87 each coordinate Zn(2+). A substrate-binding site is contributed by aspartate 147.

It belongs to the cytidine and deoxycytidylate deaminase family. As to quaternary structure, homodimer. It depends on Zn(2+) as a cofactor.

Its subcellular location is the cytoplasm. It is found in the nucleus. It catalyses the reaction cytosine + H2O + H(+) = uracil + NH4(+). It participates in pyrimidine metabolism; UMP biosynthesis via salvage pathway; uracil from cytosine: step 1/1. Catalyzes the hydrolytic deamination of cytosine to uracil or 5-methylcytosine to thymine. Is involved in the pyrimidine salvage pathway, which allows the cell to utilize cytosine for pyrimidine nucleotide synthesis. This Candida albicans (strain SC5314 / ATCC MYA-2876) (Yeast) protein is Cytosine deaminase.